Here is a 593-residue protein sequence, read N- to C-terminus: Kelch-like protein 2 (593 aa).

A disordered region spans residues 1–29 (METPPLPPACTKQGHQKPLDSKDENPEKH). The segment covering 17–29 (KPLDSKDENPEKH) has biased composition (basic and acidic residues). The BTB domain maps to 56 to 123 (CDVTIVAEDM…VYTAEIQVTE (68 aa)). Kelch repeat units follow at residues 308–353 (LMVV…YMAG), 354–400 (LVFA…VLNG), 402–447 (LYAV…VVGG), 449–496 (LYAV…VLNN), 497–543 (LLYA…AVNG), and 545–591 (LYVV…VIDK).

As to quaternary structure, component of the BCR(KLHL2) E3 ubiquitin ligase complex, at least composed of CUL3 and KLHL2 and RBX1. Binds actin. Interacts with KLHL12. Interacts (via N-terminus) with FYN (via SH3 domain).

It is found in the cytoplasm. It localises to the cytoskeleton. Its subcellular location is the cell projection. The protein resides in the ruffle. The protein localises to the lamellipodium. It is found in the cytosol. It participates in protein modification; protein ubiquitination. Its function is as follows. Substrate-specific adapter of a BCR (BTB-CUL3-RBX1) E3 ubiquitin ligase complex that mediates the ubiquitination of target proteins, such as NPTXR, WNK1, WNK3 and WNK4, leading most often to their proteasomal degradation. The BCR(KLHL2) complex catalyzes ubiquitination and degradation of NPTXR. Responsible for degradative ubiquitination of the WNK kinases WNK1, WNK3 and WNK4. Plays a role in the reorganization of the actin cytoskeleton. Promotes growth of cell projections in oligodendrocyte precursors. The sequence is that of Kelch-like protein 2 from Mus musculus (Mouse).